We begin with the raw amino-acid sequence, 473 residues long: Catalase easC (473 aa).

The segment covering M1–S15 has biased composition (low complexity). The tract at residues M1 to D31 is disordered. The active site involves H54. Y344 contacts heme. The tract at residues L352 to A389 is disordered. Basic and acidic residues predominate over residues K366–E377.

This sequence belongs to the catalase family. The cofactor is heme.

The protein operates within alkaloid biosynthesis; ergot alkaloid biosynthesis. In terms of biological role, catalase; part of the gene cluster that mediates the biosynthesis of fungal ergot alkaloid. DmaW catalyzes the first step of ergot alkaloid biosynthesis by condensing dimethylallyl diphosphate (DMAP) and tryptophan to form 4-dimethylallyl-L-tryptophan. The second step is catalyzed by the methyltransferase easF that methylates 4-dimethylallyl-L-tryptophan in the presence of S-adenosyl-L-methionine, resulting in the formation of 4-dimethylallyl-L-abrine. The catalase easC and the FAD-dependent oxidoreductase easE then transform 4-dimethylallyl-L-abrine to chanoclavine-I which is further oxidized by easD in the presence of NAD(+), resulting in the formation of chanoclavine-I aldehyde. Agroclavine dehydrogenase easG then mediates the conversion of chanoclavine-I aldehyde to agroclavine via a non-enzymatic adduct reaction: the substrate is an iminium intermediate that is formed spontaneously from chanoclavine-I aldehyde in the presence of glutathione. The presence of easA is not required to complete this reaction. Further conversion of agroclavine to paspalic acid is a two-step process involving oxidation of agroclavine to elymoclavine and of elymoclavine to paspalic acid, the second step being performed by the elymoclavine oxidase cloA. Paspalic acid is then further converted to D-lysergic acid. Ergopeptines are assembled from D-lysergic acid and three different amino acids by the D-lysergyl-peptide-synthetases composed each of a monomudular and a trimodular nonribosomal peptide synthetase subunit. LpsB and lpsC encode the monomodular subunits responsible for D-lysergic acid activation and incorporation into the ergopeptine backbone. LpsA1 and A2 subunits encode the trimodular nonribosomal peptide synthetase assembling the tripeptide portion of ergopeptines. LpsA1 is responsible for formation of the major ergopeptine, ergotamine, and lpsA2 for alpha-ergocryptine, the minor ergopeptine of the total alkaloid mixture elaborated by C.purpurea. D-lysergyl-tripeptides are assembled by the nonribosomal peptide synthetases and released as N-(D-lysergyl-aminoacyl)-lactams. Cyclolization of the D-lysergyl-tripeptides is performed by the Fe(2+)/2-ketoglutarate-dependent dioxygenase easH which introduces a hydroxyl group into N-(D-lysergyl-aminoacyl)-lactam at alpha-C of the aminoacyl residue followed by spontaneous condensation with the terminal lactam carbonyl group. The polypeptide is Catalase easC (Claviceps purpurea (strain 20.1) (Ergot fungus)).